The sequence spans 760 residues: Complement C2 (760 aa).

A signal peptide spans 1 to 18; that stretch reads MAPLLALFYLLQLGPGLA. Sushi domains lie at 20-90, 92-151, and 154-212; these read LFCN…AVCK, VRCL…VCDN, and SHCP…ICRQ. 6 disulfide bridges follow: cysteine 22/cysteine 62, cysteine 49/cysteine 89, cysteine 94/cysteine 136, cysteine 122/cysteine 149, cysteine 156/cysteine 197, and cysteine 182/cysteine 210. Residues asparagine 27 and asparagine 32 are each glycosylated (N-linked (GlcNAc...) asparagine). N-linked (GlcNAc...) asparagine glycosylation is present at asparagine 117. One can recognise a VWFA domain in the interval 261–459; it reads NLYLLLDASQ…KALQQIFEHM (199 aa). The MIDAS-like motif motif lies at 267–271; the sequence is DASQS. Mg(2+) is bound by residues serine 269 and serine 271. 2 N-linked (GlcNAc...) asparagine glycosylation sites follow: asparagine 297 and asparagine 340. Threonine 344 serves as a coordination point for Mg(2+). Disulfide bonds link cysteine 470–cysteine 590, cysteine 499–cysteine 515, cysteine 593–cysteine 609, cysteine 647–cysteine 674, and cysteine 685–cysteine 715. The Peptidase S1 domain occupies 471–752; sequence GVGNMSANAS…LQPWLRQHLD (282 aa). 2 N-linked (GlcNAc...) asparagine glycosylation sites follow: asparagine 474 and asparagine 478. Active-site charge relay system residues include histidine 514 and aspartate 570. Asparagine 663 is a glycosylation site (N-linked (GlcNAc...) asparagine). Serine 689 serves as the catalytic Charge relay system.

Belongs to the peptidase S1 family. Serine protease component of the C3 convertase, also named C4bC2b, composed of the serine protease complement C2b and complement C4b. Serine protease component of the C5 convertase, also named C4bC2bC3b, composed of the serine protease complement C2b, complement C3b, as well as complement C4b. Mg(2+) serves as cofactor. Mn(2+) is required as a cofactor. In terms of processing, cleaved and activated by different proteases depending on the complement pathway to generate complement C2a and serine protease complement C2b chains. Cleaved and activated by C1S following activation by the classical complement system. Cleaved and activated by MASP2 following activation by the lectin complement system. Cleaved and activated by GZMK following activation by the GZMK complement system.

Its subcellular location is the secreted. It is found in the cell surface. It catalyses the reaction Selective cleavage of Arg-|-Ser bond in complement component C3 alpha-chain to form C3a and C3b, and Arg-|-Xaa bond in complement component C5 alpha-chain to form C5a and C5b.. Its function is as follows. Precursor of the catalytic component of the C3 and C5 convertase complexes, which are part of the complement pathway, a cascade of proteins that leads to phagocytosis and breakdown of pathogens and signaling that strengthens the adaptive immune system. Component C2 is part of the classical, lectin and GZMK complement systems. In terms of biological role, catalytic component of the complement C3 and C5 convertase complexes. Following complement activation, recruited to the surface of pathogens by complement C4b opsonin to form the C3 convertase, or C3b and C4b opsonins to form the C5 convertase. As part of the C3 convertase, cleaves and activate C3 into C3a anaphylatoxin and C3b opsonin, the next components of the complement pathways. As part of the C5 convertase, cleaves and activate C5 into C5a anaphylatoxin and C5b component of the membrane attack complex. In Mus musculus (Mouse), this protein is Complement C2.